Reading from the N-terminus, the 81-residue chain is Exodeoxyribonuclease 7 small subunit (81 aa).

This sequence belongs to the XseB family. Heterooligomer composed of large and small subunits.

The protein localises to the cytoplasm. The catalysed reaction is Exonucleolytic cleavage in either 5'- to 3'- or 3'- to 5'-direction to yield nucleoside 5'-phosphates.. Bidirectionally degrades single-stranded DNA into large acid-insoluble oligonucleotides, which are then degraded further into small acid-soluble oligonucleotides. The sequence is that of Exodeoxyribonuclease 7 small subunit from Ruegeria sp. (strain TM1040) (Silicibacter sp.).